Here is a 62-residue protein sequence, read N- to C-terminus: Bacteriocin lactacin-F subunit LafX (62 aa).

Positions 1–14 (MKLNDKELSKIVGG) are excised as a propeptide.

It belongs to the bacteriocin class IIB family. As to quaternary structure, this bacteriocin depends upon the complementation of two peptides for activity: LafA and LafX. Associated with a 180 kDa bacteriocin complex.

Heat stable bacteriocin active against Enterococcus faecalis and other Lactobacilli. The sequence is that of Bacteriocin lactacin-F subunit LafX (lafX) from Lactobacillus johnsonii (strain CNCM I-12250 / La1 / NCC 533).